We begin with the raw amino-acid sequence, 504 residues long: Protein nucleotidyltransferase YdiU (504 aa).

Residues Gly-99, Gly-101, Arg-102, Lys-122, Asp-134, Gly-135, Arg-185, and Arg-192 each contribute to the ATP site. Catalysis depends on Asp-261, which acts as the Proton acceptor. Positions 262 and 271 each coordinate Mg(2+). Residue Asp-271 participates in ATP binding.

The protein belongs to the SELO family. Requires Mg(2+) as cofactor. The cofactor is Mn(2+).

The catalysed reaction is L-seryl-[protein] + ATP = 3-O-(5'-adenylyl)-L-seryl-[protein] + diphosphate. It carries out the reaction L-threonyl-[protein] + ATP = 3-O-(5'-adenylyl)-L-threonyl-[protein] + diphosphate. It catalyses the reaction L-tyrosyl-[protein] + ATP = O-(5'-adenylyl)-L-tyrosyl-[protein] + diphosphate. The enzyme catalyses L-histidyl-[protein] + UTP = N(tele)-(5'-uridylyl)-L-histidyl-[protein] + diphosphate. The catalysed reaction is L-seryl-[protein] + UTP = O-(5'-uridylyl)-L-seryl-[protein] + diphosphate. It carries out the reaction L-tyrosyl-[protein] + UTP = O-(5'-uridylyl)-L-tyrosyl-[protein] + diphosphate. Nucleotidyltransferase involved in the post-translational modification of proteins. It can catalyze the addition of adenosine monophosphate (AMP) or uridine monophosphate (UMP) to a protein, resulting in modifications known as AMPylation and UMPylation. This chain is Protein nucleotidyltransferase YdiU, found in Methylococcus capsulatus (strain ATCC 33009 / NCIMB 11132 / Bath).